A 74-amino-acid chain; its full sequence is U5-theraphotoxin-Cg1a (74 aa).

Residues 1–19 (MNATIFALLLLLNLAMYNA) form the signal peptide. Positions 20–39 (AEQSSETDMDDTLLIPENYR) are excised as a propeptide. 3 cysteine pairs are disulfide-bonded: Cys-42–Cys-56, Cys-49–Cys-61, and Cys-55–Cys-71.

The protein belongs to the neurotoxin 36 family. 01 subfamily. Expressed by the venom gland.

It is found in the secreted. Functionally, probable ion channel inhibitor. The sequence is that of U5-theraphotoxin-Cg1a from Chilobrachys guangxiensis (Chinese earth tiger tarantula).